The following is a 511-amino-acid chain: Keratin, type II cytoskeletal 72 (511 aa).

The interval 1-124 is head; that stretch reads MSRQLTHFPR…DPEIQRVRAQ (124 aa). A coil 1A region spans residues 125-160; it reads EREQIKALNNKFASFIDKVRFLEQQNQVLETKWNLL. The IF rod domain occupies 125-438; sequence EREQIKALNN…KLLESEECRM (314 aa). Residues 161-179 are linker 1; that stretch reads QQLDLNNCRKNLEPIYEGY. The tract at residues 180–271 is coil 1B; it reads ISNLQKQLEM…CLYEGEITQI (92 aa). A linker 12 region spans residues 272-295; the sequence is QSHISDTSIVLSMDNNRDLDLDSI. The coil 2 stretch occupies residues 296 to 434; sequence IAEVRAQYEE…ATYRKLLESE (139 aa). The tail stretch occupies residues 435–511; sequence ECRMSGEYPN…SSCATKKASR (77 aa). Positions 486 to 511 are disordered; it reads GSCGSELKDPLAKTSGSSCATKKASR.

This sequence belongs to the intermediate filament family. As to quaternary structure, heterotetramer of two type I and two type II keratins. In terms of tissue distribution, highly expressed in hair follicles from scalp and eyebrow. Also expressed in palmoplantar epidermis. Not expressed in face skin despite the presence of fine hairs histologically. In hair, it is specifically present in the inner root sheath (IRS) of the hair follicle. Present in the IRS cuticle, but not in Henle or Huxley layers of the IRS. In the IRS cuticle, its presence is delayed up to the height of the apex of the dermal papilla (at protein level).

Has a role in hair formation. Specific component of keratin intermediate filaments in the inner root sheath (IRS) of the hair follicle. In Homo sapiens (Human), this protein is Keratin, type II cytoskeletal 72 (KRT72).